Consider the following 148-residue polypeptide: NADPH-dependent 7-cyano-7-deazaguanine reductase (148 aa).

Residue Cys-50 is the Thioimide intermediate of the active site. Asp-57 (proton donor) is an active-site residue. Residues Val-72 to Ser-74 and His-91 to Glu-92 each bind substrate.

It belongs to the GTP cyclohydrolase I family. QueF type 1 subfamily.

Its subcellular location is the cytoplasm. The enzyme catalyses 7-aminomethyl-7-carbaguanine + 2 NADP(+) = 7-cyano-7-deazaguanine + 2 NADPH + 3 H(+). The protein operates within tRNA modification; tRNA-queuosine biosynthesis. In terms of biological role, catalyzes the NADPH-dependent reduction of 7-cyano-7-deazaguanine (preQ0) to 7-aminomethyl-7-deazaguanine (preQ1). In Helicobacter pylori (strain HPAG1), this protein is NADPH-dependent 7-cyano-7-deazaguanine reductase.